We begin with the raw amino-acid sequence, 142 residues long: Protein KNATM (142 aa).

The stretch at 4–36 (KKDENSILENMKQEINHSLKEEAQEEEEILKKR) forms a coiled coil.

Interacts with KNAT1, KNAT3, KNAT4, BEL1, BLH2, BLH4 and BLH9, but not with BLH8 or the KNATM-A and KNATM-C isoforms. Isoforms KNATM-A and KNATM-C: no interactions with KNATM-B, KNOXX or BELL proteins. Detected in inflorescences, seedlings, leaves, hydathodes, stems, roots, embryo and siliques. Expressed in a polar pattern in organ primordia and at the boundary of mature organs. Detected in the lateral domains of flower meristems, but not in the inflorescence meristem or the vegetative shoot apical meristem.

Its subcellular location is the cytoplasm. It localises to the nucleus. Functionally, transcriptional regulator involved in leaf proximal/distal patterning. May act by sequestering BELL transcription factors. This is Protein KNATM from Arabidopsis thaliana (Mouse-ear cress).